The sequence spans 184 residues: Ribulose bisphosphate carboxylase small subunit, chloroplastic 5 (184 aa).

The N-terminal 43 residues, 1–43, are a transit peptide targeting the chloroplast; that stretch reads MAAAMMNKTIVVSKDGCARSSSIPKVATNKMGFASAVAMKKSR.

This sequence belongs to the RuBisCO small chain family. As to quaternary structure, heterohexadecamer of 8 large and 8 small subunits.

The protein resides in the plastid. It localises to the chloroplast. Its function is as follows. RuBisCO catalyzes two reactions: the carboxylation of D-ribulose 1,5-bisphosphate, the primary event in carbon dioxide fixation, as well as the oxidative fragmentation of the pentose substrate. Both reactions occur simultaneously and in competition at the same active site. Although the small subunit is not catalytic it is essential for maximal activity. The protein is Ribulose bisphosphate carboxylase small subunit, chloroplastic 5 of Acetabularia peniculus (Green alga).